The sequence spans 291 residues: Nucleotide-binding protein LMHCC_0126 (291 aa).

13–20 (GMSGAGKT) contacts ATP. 63–66 (DLRG) contacts GTP.

This sequence belongs to the RapZ-like family.

In terms of biological role, displays ATPase and GTPase activities. The protein is Nucleotide-binding protein LMHCC_0126 of Listeria monocytogenes serotype 4a (strain HCC23).